Reading from the N-terminus, the 434-residue chain is Glutamyl-tRNA reductase (434 aa).

Residues 49 to 52 (TCNR), Ser-109, 114 to 116 (EPQ), and Gln-120 contribute to the substrate site. The Nucleophile role is filled by Cys-50. NADP(+) is bound at residue 189-194 (GAGEMC).

It belongs to the glutamyl-tRNA reductase family. In terms of assembly, homodimer.

The enzyme catalyses (S)-4-amino-5-oxopentanoate + tRNA(Glu) + NADP(+) = L-glutamyl-tRNA(Glu) + NADPH + H(+). It participates in porphyrin-containing compound metabolism; protoporphyrin-IX biosynthesis; 5-aminolevulinate from L-glutamyl-tRNA(Glu): step 1/2. Catalyzes the NADPH-dependent reduction of glutamyl-tRNA(Glu) to glutamate 1-semialdehyde (GSA). The chain is Glutamyl-tRNA reductase from Citrifermentans bemidjiense (strain ATCC BAA-1014 / DSM 16622 / JCM 12645 / Bem) (Geobacter bemidjiensis).